A 102-amino-acid chain; its full sequence is uncharacterized protein (102 aa).

2 helical membrane passes run 33 to 55 (VLEL…LVVL) and 57 to 79 (VVGV…VVVA).

It localises to the membrane. This is an uncharacterized protein from Saccharomyces cerevisiae (strain ATCC 204508 / S288c) (Baker's yeast).